We begin with the raw amino-acid sequence, 286 residues long: Energy-coupling factor transporter ATP-binding protein EcfA2 (286 aa).

Residues 3 to 244 (IKVENVSFIY…AERLEKIGLS (242 aa)) form the ABC transporter domain. ATP is bound at residue 40–47 (GHTGSGKS).

Belongs to the ABC transporter superfamily. Energy-coupling factor EcfA family. In terms of assembly, forms a stable energy-coupling factor (ECF) transporter complex composed of 2 membrane-embedded substrate-binding proteins (S component), 2 ATP-binding proteins (A component) and 2 transmembrane proteins (T component).

The protein resides in the cell membrane. Its function is as follows. ATP-binding (A) component of a common energy-coupling factor (ECF) ABC-transporter complex. Unlike classic ABC transporters this ECF transporter provides the energy necessary to transport a number of different substrates. The protein is Energy-coupling factor transporter ATP-binding protein EcfA2 of Caldanaerobacter subterraneus subsp. tengcongensis (strain DSM 15242 / JCM 11007 / NBRC 100824 / MB4) (Thermoanaerobacter tengcongensis).